A 309-amino-acid polypeptide reads, in one-letter code: HPr kinase/phosphorylase (309 aa).

Catalysis depends on residues His138 and Lys159. 153–160 (GDSGIGKS) contacts ATP. Ser160 is a Mg(2+) binding site. Asp177 serves as the catalytic Proton acceptor; for phosphorylation activity. Proton donor; for dephosphorylation activity. Residues 201 to 210 (LEIRGVGIID) form an important for the catalytic mechanism of both phosphorylation and dephosphorylation region. Glu202 contributes to the Mg(2+) binding site. The active site involves Arg243. Residues 264-269 (PVKTGR) form an important for the catalytic mechanism of dephosphorylation region.

It belongs to the HPrK/P family. As to quaternary structure, homohexamer. It depends on Mg(2+) as a cofactor.

It catalyses the reaction [HPr protein]-L-serine + ATP = [HPr protein]-O-phospho-L-serine + ADP + H(+). The catalysed reaction is [HPr protein]-O-phospho-L-serine + phosphate + H(+) = [HPr protein]-L-serine + diphosphate. Catalyzes the ATP- as well as the pyrophosphate-dependent phosphorylation of a specific serine residue in HPr, a phosphocarrier protein of the phosphoenolpyruvate-dependent sugar phosphotransferase system (PTS). HprK/P also catalyzes the pyrophosphate-producing, inorganic phosphate-dependent dephosphorylation (phosphorolysis) of seryl-phosphorylated HPr (P-Ser-HPr). The two antagonistic activities of HprK/P are regulated by several intracellular metabolites, which change their concentration in response to the absence or presence of rapidly metabolisable carbon sources (glucose, fructose, etc.) in the growth medium. Therefore, by controlling the phosphorylation state of HPr, HPrK/P is a sensor enzyme that plays a major role in the regulation of carbon metabolism and sugar transport: it mediates carbon catabolite repression (CCR), and regulates PTS-catalyzed carbohydrate uptake and inducer exclusion. The polypeptide is HPr kinase/phosphorylase (Streptococcus thermophilus (strain ATCC BAA-250 / LMG 18311)).